A 790-amino-acid polypeptide reads, in one-letter code: Type VI secretion system spike protein VgrG5 (790 aa).

Composition is skewed to basic and acidic residues over residues 753-763 (GFRDYRAEMPQ) and 772-790 (AYRR…EPTP). The tract at residues 753 to 790 (GFRDYRAEMPQHKPRSAPDAYRRDASRPGAADKDEPTP) is disordered.

It belongs to the VgrG protein family.

It is found in the secreted. Functionally, part of the H2 type VI secretion system (H2-T6SS) specialized secretion system, which delivers several virulence factors in both prokaryotic and eukaryotic cells during infection. Allows the delivery of the phospholipase effector PldB to target cells where it exerts its toxicity. Also plays a role in VgrG4b and its effector PldA secretion. The protein is Type VI secretion system spike protein VgrG5 of Pseudomonas aeruginosa (strain ATCC 15692 / DSM 22644 / CIP 104116 / JCM 14847 / LMG 12228 / 1C / PRS 101 / PAO1).